A 303-amino-acid chain; its full sequence is Elongation factor Ts (303 aa).

Residues threonine 80–valine 83 are involved in Mg(2+) ion dislocation from EF-Tu.

The protein belongs to the EF-Ts family.

It localises to the cytoplasm. In terms of biological role, associates with the EF-Tu.GDP complex and induces the exchange of GDP to GTP. It remains bound to the aminoacyl-tRNA.EF-Tu.GTP complex up to the GTP hydrolysis stage on the ribosome. The chain is Elongation factor Ts from Clostridium perfringens (strain SM101 / Type A).